Reading from the N-terminus, the 415-residue chain is MKKYLVGGAVRDGLLQLPVKERDWVVVGATPQEMLAQGYQHVGKDFPVFLHPDSREEYALARTERKSGQGYTGFICYASPEVTLEEDLRRRDLTINAIARDDEGNLIDPYQGQQDIRQRWLRHVSDAFGEDPLRVLRVARFAARFAHLNFRIAPETMALMQQMTDELPLLAPERVWKETERTLATRNPQVYFQVLRDCGALKALFPEVDALFGVPAPAKWHPEIDTGIHTLMTVSMAARLTDDIAVRFATLCHDVGKALTPRELWPSHHGHGPAGVKVVEALCQRLKVPNPLRDLATIVARYHDLLHGAQSLTPKTLIKLFSAIDVWRRPARLEQMILASEADARGRTGFENHAYPQGDFLRDAFRVASSVSARDVMAAGFSGAQIGEELNRRRQQALASWKRQQENSDTETIQD.

ATP is bound by residues G8 and R11. G8 and R11 together coordinate CTP. Positions 21 and 23 each coordinate Mg(2+). 3 residues coordinate ATP: R91, R137, and R140. Residues R91, R137, and R140 each coordinate CTP. The 102-residue stretch at 226 to 327 (TGIHTLMTVS…IKLFSAIDVW (102 aa)) folds into the HD domain.

It belongs to the tRNA nucleotidyltransferase/poly(A) polymerase family. Bacterial CCA-adding enzyme type 1 subfamily. In terms of assembly, monomer. Can also form homodimers and oligomers. Mg(2+) serves as cofactor. Requires Ni(2+) as cofactor.

The catalysed reaction is a tRNA precursor + 2 CTP + ATP = a tRNA with a 3' CCA end + 3 diphosphate. It catalyses the reaction a tRNA with a 3' CCA end + 2 CTP + ATP = a tRNA with a 3' CCACCA end + 3 diphosphate. In terms of biological role, catalyzes the addition and repair of the essential 3'-terminal CCA sequence in tRNAs without using a nucleic acid template. Adds these three nucleotides in the order of C, C, and A to the tRNA nucleotide-73, using CTP and ATP as substrates and producing inorganic pyrophosphate. tRNA 3'-terminal CCA addition is required both for tRNA processing and repair. Also involved in tRNA surveillance by mediating tandem CCA addition to generate a CCACCA at the 3' terminus of unstable tRNAs. While stable tRNAs receive only 3'-terminal CCA, unstable tRNAs are marked with CCACCA and rapidly degraded. The chain is Multifunctional CCA protein from Sodalis glossinidius (strain morsitans).